Reading from the N-terminus, the 892-residue chain is Leucine--tRNA ligase (892 aa).

Residues Pro-42–His-52 carry the 'HIGH' region motif. The 'KMSKS' region signature appears at Thr-640–Ser-644. Residue Lys-643 coordinates ATP.

Belongs to the class-I aminoacyl-tRNA synthetase family.

It is found in the cytoplasm. The catalysed reaction is tRNA(Leu) + L-leucine + ATP = L-leucyl-tRNA(Leu) + AMP + diphosphate. This chain is Leucine--tRNA ligase, found in Albidiferax ferrireducens (strain ATCC BAA-621 / DSM 15236 / T118) (Rhodoferax ferrireducens).